The primary structure comprises 575 residues: MAIIPGVEQKPMSSNLESRIDQGTGREPADMVLKGGRFFDLVTGELVASDIAICGDTVVGTCGDYKGRHEIDISGKIVVPGFIDTHLHIESSLVTPHEFDRCVLPYGVTTAICDPHEIANVLGAEGLQFFLDSAMETIMDIRVQLSSCVPATHLETSGADLPIEKLLPFRNHPKVIGLAEFMNFPGVIHKDPVCMAKLEAFQGQHIDGHAPLLSGAALNGYLAAGIRTEHECTSAAEALEKIRKGMHILVREGSVSKDLHALMPIITERLSPYLALCTDDRNPLDIAEQGHLDYMIRTAIASGVEPLAIYRAASISAAKAFGLRDRGLVAPGWRADLVVIDTLQNCKASMVLSGGRLVDDALFATRKPVAPVGLDSVKARPVLASHFGVPVTEGETPVMGVLPGKIITEHRRYKLPTDGNQTTVDLENDIIKVAVIERHGKNGNHANGFVQGFGLKKGAIASTVGHDSHNICVVGVSEDDMALAANRLGDIKGGFVVVEDGRVTGEIALPVAGLMSLEPYETVRDTLHTLRKAAYALGTTLEEPFLQVAFLPLPVIPHLKISDMGMVDVDRFALI.

It belongs to the metallo-dependent hydrolases superfamily. Adenine deaminase family. Requires Mn(2+) as cofactor.

The catalysed reaction is adenine + H2O + H(+) = hypoxanthine + NH4(+). This Agrobacterium fabrum (strain C58 / ATCC 33970) (Agrobacterium tumefaciens (strain C58)) protein is Adenine deaminase 1.